We begin with the raw amino-acid sequence, 570 residues long: Sulfite reductase [NADPH] hemoprotein beta-component (570 aa).

Positions 434, 440, 479, and 483 each coordinate [4Fe-4S] cluster. Cysteine 483 is a binding site for siroheme.

Belongs to the nitrite and sulfite reductase 4Fe-4S domain family. Alpha(8)-beta(8). The alpha component is a flavoprotein, the beta component is a hemoprotein. The cofactor is siroheme. It depends on [4Fe-4S] cluster as a cofactor.

It carries out the reaction hydrogen sulfide + 3 NADP(+) + 3 H2O = sulfite + 3 NADPH + 4 H(+). It participates in sulfur metabolism; hydrogen sulfide biosynthesis; hydrogen sulfide from sulfite (NADPH route): step 1/1. Component of the sulfite reductase complex that catalyzes the 6-electron reduction of sulfite to sulfide. This is one of several activities required for the biosynthesis of L-cysteine from sulfate. In Salmonella agona (strain SL483), this protein is Sulfite reductase [NADPH] hemoprotein beta-component.